A 128-amino-acid chain; its full sequence is L-ectoine synthase (128 aa).

It belongs to the ectoine synthase family.

It catalyses the reaction (2S)-4-acetamido-2-aminobutanoate = L-ectoine + H2O. Its pathway is amine and polyamine biosynthesis; ectoine biosynthesis; L-ectoine from L-aspartate 4-semialdehyde: step 3/3. Its function is as follows. Catalyzes the circularization of gamma-N-acetyl-alpha,gamma-diaminobutyric acid (ADABA) to ectoine (1,4,5,6-tetrahydro-2-methyl-4-pyrimidine carboxylic acid), which is an excellent osmoprotectant. The chain is L-ectoine synthase from Aliivibrio fischeri (strain MJ11) (Vibrio fischeri).